The chain runs to 344 residues: Succinylglutamate desuccinylase (344 aa).

Residues His-63, Glu-66, and His-160 each coordinate Zn(2+). Glu-224 is a catalytic residue.

Belongs to the AspA/AstE family. Succinylglutamate desuccinylase subfamily. It depends on Zn(2+) as a cofactor.

It carries out the reaction N-succinyl-L-glutamate + H2O = L-glutamate + succinate. The protein operates within amino-acid degradation; L-arginine degradation via AST pathway; L-glutamate and succinate from L-arginine: step 5/5. Functionally, transforms N(2)-succinylglutamate into succinate and glutamate. This is Succinylglutamate desuccinylase from Shewanella baltica (strain OS223).